Here is a 219-residue protein sequence, read N- to C-terminus: Cytidylate kinase (219 aa).

An ATP-binding site is contributed by 21–29 (GPAASGKGT).

The protein belongs to the cytidylate kinase family. Type 1 subfamily.

Its subcellular location is the cytoplasm. The enzyme catalyses CMP + ATP = CDP + ADP. It carries out the reaction dCMP + ATP = dCDP + ADP. The protein is Cytidylate kinase of Rickettsia prowazekii (strain Madrid E).